The sequence spans 334 residues: tRNA N6-adenosine threonylcarbamoyltransferase (334 aa).

2 residues coordinate Fe cation: H110 and H114. Substrate is bound by residues 133–137, D166, G179, D183, and N275; that span reads IVSGG. D303 is a Fe cation binding site.

This sequence belongs to the KAE1 / TsaD family. Requires Fe(2+) as cofactor.

It localises to the cytoplasm. It carries out the reaction L-threonylcarbamoyladenylate + adenosine(37) in tRNA = N(6)-L-threonylcarbamoyladenosine(37) in tRNA + AMP + H(+). Its function is as follows. Required for the formation of a threonylcarbamoyl group on adenosine at position 37 (t(6)A37) in tRNAs that read codons beginning with adenine. Is involved in the transfer of the threonylcarbamoyl moiety of threonylcarbamoyl-AMP (TC-AMP) to the N6 group of A37, together with TsaE and TsaB. TsaD likely plays a direct catalytic role in this reaction. The polypeptide is tRNA N6-adenosine threonylcarbamoyltransferase (Salinibacter ruber (strain DSM 13855 / M31)).